Consider the following 113-residue polypeptide: Nucleoid-associated protein ROP_41370 (113 aa).

This sequence belongs to the YbaB/EbfC family. Homodimer.

It is found in the cytoplasm. The protein resides in the nucleoid. Binds to DNA and alters its conformation. May be involved in regulation of gene expression, nucleoid organization and DNA protection. In Rhodococcus opacus (strain B4), this protein is Nucleoid-associated protein ROP_41370.